The sequence spans 210 residues: MAKNAMLCLLILRVVLALAFATNKKGDEEPENHSTGIFGKVGRVVTVALAMSSRLGGADATRGGGAVYGGNLKSNQLPNNNWMAPPPPMAIRSAKVYDSKHSPAEYLKKFAQDFRRKTGMHSQRHHEETTLEQEKRVAGAGPDPIHHQDTTLEQEKRAVPAGPDPKHHEETTLEQEKRAVPAGPDPKHHEDTTLEQEKRGAPAGPDPIHH.

Residues 1–21 (MAKNAMLCLLILRVVLALAFA) form the signal peptide. The segment at 21 to 83 (ATNKKGDEEP…SNQLPNNNWM (63 aa)) is required for secretion from the host cytoplasm to the host apoplasm. A glycan (N-linked (GlcNAc...) asparagine) is linked at asparagine 32. The disordered stretch occupies residues 116–210 (RKTGMHSQRH…APAGPDPIHH (95 aa)). 2 stretches are compositionally biased toward basic and acidic residues: residues 125–137 (HHEETTLEQEKRV) and 144–200 (PIHH…EKRG). The stretch at 127–135 (EETTLEQEK) is one A-1 repeat. The segment at 127-198 (EETTLEQEKR…HEDTTLEQEK (72 aa)) is 4 X approximate repeat A. The CLE-1 repeat unit spans residues 136–147 (RVAGAGPDPIHH). Positions 136–210 (RVAGAGPDPI…APAGPDPIHH (75 aa)) are 4 X approximate repeat CLE. An A-2 repeat occupies 148-156 (QDTTLEQEK). The stretch at 157–168 (RAVPAGPDPKHH) is one CLE-2 repeat. The A-3 repeat unit spans residues 169–177 (EETTLEQEK). The CLE-3 repeat unit spans residues 178–189 (RAVPAGPDPKHH). The A-4 repeat unit spans residues 190–198 (EDTTLEQEK). One copy of the CLE-4 repeat lies at 199 to 210 (RGAPAGPDPIHH).

Belongs to the CLV3/ESR signal peptide family. Highly expressed exclusively within the dorsal esophageal gland cell during syncytium formation in host plants.

It is found in the secreted. Its subcellular location is the host cytoplasm. It localises to the host extracellular space. The protein localises to the extracellular space. The protein resides in the apoplast. Mimics host plant CLE extracellular signal peptides that regulate cell fate. May play a role in the differentiation or division of feeding cells (syncytia) induced in plant roots during infection. The chain is CLAVATA3/ESR (CLE)-related protein 4A-3 (CLE-4A-3) from Globodera rostochiensis (Golden nematode worm).